The following is a 545-amino-acid chain: Esterase-5B (545 aa).

The signal sequence occupies residues 1–19; the sequence is MYCEKLILLLGCFWISSSA. The cysteines at positions 84 and 103 are disulfide-linked. N-linked (GlcNAc...) asparagine glycosylation occurs at asparagine 113. Serine 207 (acyl-ester intermediate) is an active-site residue. Cysteine 259 and cysteine 271 are joined by a disulfide. N-linked (GlcNAc...) asparagine glycosylation occurs at asparagine 421. Histidine 467 functions as the Charge relay system in the catalytic mechanism. An N-linked (GlcNAc...) asparagine glycan is attached at asparagine 507. An intrachain disulfide couples cysteine 515 to cysteine 536.

The protein belongs to the type-B carboxylesterase/lipase family. Homodimer.

The protein resides in the secreted. The catalysed reaction is a carboxylic ester + H2O = an alcohol + a carboxylate + H(+). In Drosophila miranda (Fruit fly), this protein is Esterase-5B (Est-5B).